The primary structure comprises 370 residues: Peptidyl-prolyl cis-trans isomerase D (370 aa).

Ser-5 carries the phosphoserine modification. The PPIase cyclophilin-type domain maps to 19 to 183; the sequence is FFDVDIGGER…KLCVIAECGE (165 aa). The residue at position 171 (Lys-171) is an N6-acetyllysine. Residues 185–215 are chaperone activity; that stretch reads KEGDDGGIFPKDGSGDSHPDFPEDADIDLKD. Phosphoserine is present on Ser-198. The segment at 214–370 is interaction with HSP90AB1; the sequence is KDVDKILLIT…EKAVYAKMFA (157 aa). TPR repeat units lie at residues 223–256, 273–306, and 307–340; these read TEDLKNIGNTFFKSQNWEMAIKKYAEVLRYVDSS, LSCVLNIGACKLKMSNWQGAIDSCLEALELDPSN, and TKALYRRAQGWQGLKEYDQALADLKKAQGIAPED.

This sequence belongs to the cyclophilin-type PPIase family. PPIase D subfamily. Identified in ESR1 or NR3C1/GCR steroid receptor-chaperone complexes. Found in HSP90 chaperone complexes with kinase clients LCK or EIF2AK1. Two monomers associate with one HSP90 homodimer. Interacts with HSP90AA1. Interacts with HSP90AB1; PPID and FKBP4 compete for binding to HSP90AB1 and the interaction is mutually exclusive with the PPID:HSPA8 interaction. Interacts with HSPA8; PPID and STIP1 but not FKBP4 compete for binding to HSPA8 and the interaction is mutually exclusive with the PPID:HSP90AB1 interaction. Interacts with S100A1 and S100A2; the interactions dissociate the PPID:HSP90AA1 interaction. Interacts with S100A6. Interacts with MYB, ILF2, XRCC6, RACK1 and RPS3. Interacts with cytoplasmic dynein 1 intermediate chain (DYNC1I1 or DYNC1I2). Widely expressed.

The protein localises to the cytoplasm. It localises to the nucleus. Its subcellular location is the nucleolus. It is found in the nucleoplasm. The catalysed reaction is [protein]-peptidylproline (omega=180) = [protein]-peptidylproline (omega=0). Its activity is regulated as follows. Less sensitive to inhibition by cyclosporin A than is CYP-18. PPIase that catalyzes the cis-trans isomerization of proline imidic peptide bonds in oligopeptides and may therefore assist protein folding. Proposed to act as a co-chaperone in HSP90 complexes such as in unligated steroid receptors heterocomplexes. Different co-chaperones seem to compete for association with HSP90 thus establishing distinct HSP90-co-chaperone-receptor complexes with the potential to exert tissue-specific receptor activity control. May have a preference for estrogen receptor complexes and is not found in glucocorticoid receptor complexes. May be involved in cytoplasmic dynein-dependent movement of the receptor from the cytoplasm to the nucleus. May regulate MYB by inhibiting its DNA-binding activity. Involved in regulation of AHR signaling by promoting the formation of the AHR:ARNT dimer; the function is independent of HSP90 but requires the chaperone activity. Involved in regulation of UV radiation-induced apoptosis. Promotes cell viability in anaplastic lymphoma kinase-positive anaplastic large-cell lymphoma (ALK+ ALCL) cell lines. Its function is as follows. (Microbial infection) May be involved in hepatitis C virus (HCV) replication and release. In Homo sapiens (Human), this protein is Peptidyl-prolyl cis-trans isomerase D.